Here is a 341-residue protein sequence, read N- to C-terminus: Serine proteinase inhibitor 2 (341 aa).

This sequence belongs to the serpin family. Poxviruses subfamily.

It localises to the host cytoplasm. In terms of biological role, viral serpin that inhibits both cysteine and serine proteinases involved in the regulation of host inflammatory and apoptosis processes. Major anti-apoptotic protein which inhibits both intrinsic and extrinsic pathways and strongly cleaves host CASP1 and CASP8 but is a rather poor inhibitor of host CASP3. Prevents the proteolytic activity of host interleukin-1-beta converting enzyme (ICE) and ICE-like enzymes. Can also block apoptosis through host tumor necrosis factor (TNF) receptor. This is Serine proteinase inhibitor 2 (OPG199) from Bos taurus (Bovine).